Consider the following 324-residue polypeptide: Malate dehydrogenase (324 aa).

NAD(+)-binding positions include 7–13 (GAAGGIG) and D34. R88 and R94 together coordinate substrate. NAD(+)-binding positions include N101 and 124–126 (VTN). Substrate-binding residues include N126 and R160. H184 (proton acceptor) is an active-site residue. M238 serves as a coordination point for NAD(+).

Belongs to the LDH/MDH superfamily. MDH type 1 family. In terms of assembly, homodimer.

It carries out the reaction (S)-malate + NAD(+) = oxaloacetate + NADH + H(+). Its function is as follows. Catalyzes the reversible oxidation of malate to oxaloacetate. The protein is Malate dehydrogenase of Haemophilus ducreyi (strain 35000HP / ATCC 700724).